We begin with the raw amino-acid sequence, 445 residues long: FAS-associated factor 2 (445 aa).

A UBA domain is found at Glu-12–Glu-53. The stretch at Ser-275 to Glu-353 forms a coiled coil. Basic and acidic residues predominate over residues Ala-303–Glu-348. Residues Ala-303–Pro-354 form a disordered region. The region spanning Asp-357 to Val-439 is the UBX domain.

The protein localises to the cytoplasm. The protein resides in the lipid droplet. Its subcellular location is the endoplasmic reticulum. Plays an important role in endoplasmic reticulum-associated degradation (ERAD) that mediates ubiquitin-dependent degradation of misfolded endoplasmic reticulum proteins. Involved in inhibition of lipid droplet degradation. Involved in stress granule disassembly. This chain is FAS-associated factor 2 (faf2), found in Xenopus tropicalis (Western clawed frog).